The chain runs to 225 residues: MVKVTFLGHAAFYIEGSKKILIDPFLSGNPVASAKPDDFKSVDLILVTHAHGDHLGDVGTIAKRTGAKVVAMYDLANYIAEKYKGVETIGMNYGPTKVDEVEIVQVPAWHSSSDGKYSIGNACGYIVKLDGVTIYHAGDTYVFKDMELFAELYGPIDVALLPIGGHFTMGVREAAKAVELLKPRHVIPMHYNTWPPIAADPEEFKKLVGEKAKVVILKPGESLEL.

Belongs to the UPF0173 family.

The polypeptide is UPF0173 metal-dependent hydrolase PF1764 (Pyrococcus furiosus (strain ATCC 43587 / DSM 3638 / JCM 8422 / Vc1)).